The following is a 65-amino-acid chain: Kappa-scoloptoxin(04)-Ssd1a (65 aa).

Residues 1–24 form the signal peptide; that stretch reads MKKTCVVSVFLVLLLLKFHDLSMG. Residues 25–36 constitute a propeptide that is removed on maturation; it reads EEISPLKKVAPR. Intrachain disulfides connect C42-C53 and C47-C60.

In terms of tissue distribution, expressed by the venom gland.

The protein resides in the secreted. Its function is as follows. Voltage-gated potassium channel inhibitor. This Scolopendra dehaani (Thai centipede) protein is Kappa-scoloptoxin(04)-Ssd1a.